Reading from the N-terminus, the 514-residue chain is Chromosomal replication initiator protein DnaA (514 aa).

The interval 1–90 (MSVELWQQCV…KRSRTPRAAI (90 aa)) is domain I, interacts with DnaA modulators. A domain II region spans residues 91–177 (VPSQTHVAPP…QVEGALKHTS (87 aa)). The segment at 178 to 394 (YLNRTFTFEN…GALKRVIAHS (217 aa)) is domain III, AAA+ region. Residues G222, G224, K225, and T226 each contribute to the ATP site. A domain IV, binds dsDNA region spans residues 395–514 (HFMGRPITIE…YKNLLRTLTT (120 aa)).

Belongs to the DnaA family. Oligomerizes as a right-handed, spiral filament on DNA at oriC.

It localises to the cytoplasm. Functionally, plays an essential role in the initiation and regulation of chromosomal replication. ATP-DnaA binds to the origin of replication (oriC) to initiate formation of the DNA replication initiation complex once per cell cycle. Binds the DnaA box (a 9 base pair repeat at the origin) and separates the double-stranded (ds)DNA. Forms a right-handed helical filament on oriC DNA; dsDNA binds to the exterior of the filament while single-stranded (ss)DNA is stabiized in the filament's interior. The ATP-DnaA-oriC complex binds and stabilizes one strand of the AT-rich DNA unwinding element (DUE), permitting loading of DNA polymerase. After initiation quickly degrades to an ADP-DnaA complex that is not apt for DNA replication. Binds acidic phospholipids. The sequence is that of Chromosomal replication initiator protein DnaA from Pseudomonas aeruginosa (strain LESB58).